The primary structure comprises 128 residues: MSFIKEFREFAMRGNVVDMAVGVIIGGAFGKIVSSLVGDVVMPVLGILTGGVDFKDMKMVLAEAVGETPAVTLNYGMFIQNVFDFIIIAFAIFLMIKAINKLKKPAEEAPKGPSQEELLAEIRDLLKK.

The next 2 membrane-spanning stretches (helical) occupy residues 10–30 (FAMR…GAFG) and 76–96 (GMFI…FLMI).

Belongs to the MscL family. In terms of assembly, homopentamer.

The protein localises to the cell inner membrane. Channel that opens in response to stretch forces in the membrane lipid bilayer. May participate in the regulation of osmotic pressure changes within the cell. The polypeptide is Large-conductance mechanosensitive channel (Actinobacillus succinogenes (strain ATCC 55618 / DSM 22257 / CCUG 43843 / 130Z)).